Here is a 196-residue protein sequence, read N- to C-terminus: Charged multivesicular body protein 1a (196 aa).

Position 1 is an N-acetylmethionine (M1). A coiled-coil region spans residues 5 to 42 (LFQLKFTAKQLEKLAKKAEKDSKAEQAKVKKALQQKNV). Residue S101 is modified to Phosphoserine. A coiled-coil region spans residues 102 to 124 (AMDLQKVSAVMDRFEQQVQNLDV). Phosphoserine is present on S173. The MIT-interacting motif motif lies at 185-195 (DQLSRRLAALR).

The protein belongs to the SNF7 family. Probable peripherally associated component of the endosomal sorting required for transport complex III (ESCRT-III). ESCRT-III components are thought to multimerize to form a flat lattice on the perimeter membrane of the endosome. Several assembly forms of ESCRT-III may exist that interact and act sequentially. Self-associates. Interacts with CHMP1B. Interacts with VPS4A. Interacts with VPS4B. Interacts with PHF1. Interacts with IST1. Interacts with MITD1. Highly expressed in adult heart, kidney and liver. Expressed at lower levels in adult colon, spleen, lung, brain, testis and muscle. Also expressed in myoblasts and embryo fibroblasts.

It is found in the cytoplasm. The protein resides in the endosome membrane. It localises to the nucleus matrix. Probable peripherally associated component of the endosomal sorting required for transport complex III (ESCRT-III) which is involved in multivesicular bodies (MVBs) formation and sorting of endosomal cargo proteins into MVBs. MVBs contain intraluminal vesicles (ILVs) that are generated by invagination and scission from the limiting membrane of the endosome and mostly are delivered to lysosomes enabling degradation of membrane proteins, such as stimulated growth factor receptors, lysosomal enzymes and lipids. The MVB pathway appears to require the sequential function of ESCRT-O, -I,-II and -III complexes. ESCRT-III proteins mostly dissociate from the invaginating membrane before the ILV is released. The ESCRT machinery also functions in topologically equivalent membrane fission events, such as the terminal stages of cytokinesis. ESCRT-III proteins are believed to mediate the necessary vesicle extrusion and/or membrane fission activities, possibly in conjunction with the AAA ATPase VPS4. Involved in cytokinesis. Involved in recruiting VPS4A and/or VPS4B to the midbody of dividing cells. May also be involved in chromosome condensation. Targets the Polycomb group (PcG) protein BMI1/PCGF4 to regions of condensed chromatin. May play a role in stable cell cycle progression and in PcG gene silencing. The polypeptide is Charged multivesicular body protein 1a (Chmp1a) (Mus musculus (Mouse)).